The sequence spans 119 residues: Fluoride-specific ion channel FluC 2 (119 aa).

The next 2 membrane-spanning stretches (helical) occupy residues 1–21 (MIFA…ALTS) and 44–64 (GAFF…YAFL). Gly70 and Thr73 together coordinate Na(+). The chain crosses the membrane as a helical span at residues 98 to 118 (LLASYLGGAVLLTCGYYLGSL).

It belongs to the fluoride channel Fluc/FEX (TC 1.A.43) family.

The protein localises to the cell membrane. The enzyme catalyses fluoride(in) = fluoride(out). Na(+) is not transported, but it plays an essential structural role and its presence is essential for fluoride channel function. Functionally, fluoride-specific ion channel. Important for reducing fluoride concentration in the cell, thus reducing its toxicity. The sequence is that of Fluoride-specific ion channel FluC 2 from Lactobacillus delbrueckii subsp. bulgaricus (strain ATCC 11842 / DSM 20081 / BCRC 10696 / JCM 1002 / NBRC 13953 / NCIMB 11778 / NCTC 12712 / WDCM 00102 / Lb 14).